Reading from the N-terminus, the 300-residue chain is D-alanine--D-alanine ligase (300 aa).

Residues 99 to 293 (KKILKYANIN…FAELLNSIVK (195 aa)) enclose the ATP-grasp domain. 126 to 181 (IEKIGYPVFVKPNSGGSSVATNLVKDKEGIKEAVELALKYDKEVMIENYTKGEEIT) contributes to the ATP binding site. Residues D248, E260, and N262 each contribute to the Mg(2+) site.

The protein belongs to the D-alanine--D-alanine ligase family. The cofactor is Mg(2+). Requires Mn(2+) as cofactor.

The protein resides in the cytoplasm. It carries out the reaction 2 D-alanine + ATP = D-alanyl-D-alanine + ADP + phosphate + H(+). It participates in cell wall biogenesis; peptidoglycan biosynthesis. In terms of biological role, cell wall formation. This is D-alanine--D-alanine ligase from Clostridium botulinum (strain Langeland / NCTC 10281 / Type F).